The chain runs to 518 residues: Glutamate--cysteine ligase (518 aa).

Belongs to the glutamate--cysteine ligase type 1 family. Type 1 subfamily.

It carries out the reaction L-cysteine + L-glutamate + ATP = gamma-L-glutamyl-L-cysteine + ADP + phosphate + H(+). It participates in sulfur metabolism; glutathione biosynthesis; glutathione from L-cysteine and L-glutamate: step 1/2. This is Glutamate--cysteine ligase from Salmonella paratyphi C (strain RKS4594).